Consider the following 269-residue polypeptide: Putative ankyrin repeat protein L23 (269 aa).

5 ANK repeats span residues 118 to 147 (EDDY…DIKS), 148 to 177 (DGDY…DIRA), 179 to 207 (NDYA…NIRE), 208 to 237 (QNDY…DIRA), and 238 to 267 (DNDC…DIRA).

The chain is Putative ankyrin repeat protein L23 from Acanthamoeba polyphaga (Amoeba).